A 530-amino-acid polypeptide reads, in one-letter code: UDP-glucuronosyltransferase 2B14 (530 aa).

The signal sequence occupies residues 1–24 (MSVKHVSVLLLLLQLSCCFRTGSC). N-linked (GlcNAc...) asparagine glycosylation is found at Asn134 and Asn316. The chain crosses the membrane as a helical span at residues 494–510 (VVGFLVSCAAFLIFLVI).

Belongs to the UDP-glycosyltransferase family.

Its subcellular location is the microsome membrane. The protein localises to the endoplasmic reticulum membrane. The enzyme catalyses glucuronate acceptor + UDP-alpha-D-glucuronate = acceptor beta-D-glucuronoside + UDP + H(+). UDPGT is of major importance in the conjugation and subsequent elimination of potentially toxic xenobiotics and endogenous compounds. This is UDP-glucuronosyltransferase 2B14 (UGT2B14) from Oryctolagus cuniculus (Rabbit).